The primary structure comprises 118 residues: ATP synthase subunit g, mitochondrial (118 aa).

In terms of assembly, F-type ATP synthases have 2 components, the catalytic core F(1) and the membrane-embedded component F(0), linked together by a central stalk and a peripheral stalk. The central stalk, also called rotor shaft, is often seen as part of F(1). The peripheral stalk is seen as part of F(0). F(0) contains the membrane channel next to the rotor. F-type ATP synthases form dimers but each monomer functions independently in ATP generation. The dimer consists of 18 different polypeptides: ATP1 (subunit alpha, part of F(1), 3 molecules per monomer), ATP2 (subunit beta, part of F(1), 3 molecules per monomer), ATP3 (subunit gamma, part of the central stalk), ATP4 (subunit b, part of the peripheral stalk), ATP5/OSCP (subunit 5/OSCP, part of the peripheral stalk), ATP6 (subunit a, part of the peripheral stalk), ATP7 (subunit d, part of the peripheral stalk), ATP8 (subunit 8, part of the peripheral stalk), OLI1 (subunit c, part of the rotor, 10 molecules per monomer), ATP14 (subunit h, part of the peripheral stalk), ATP15 (subunit epsilon, part of the central stalk), ATP16 (subunit delta, part of the central stalk), ATP17 (subunit f, part of the peripheral stalk), ATP18 (subunit i/j, part of the peripheral stalk). Dimer-specific subunits are ATP19 (subunit k, at interface between monomers), ATP20 (subunit g, at interface between monomers), TIM11 (subunit e, at interface between monomers). Also contains subunit L.

The protein localises to the mitochondrion inner membrane. Its function is as follows. Mitochondrial membrane ATP synthase (F(1)F(0) ATP synthase or Complex V) produces ATP from ADP in the presence of a proton gradient across the membrane which is generated by electron transport complexes of the respiratory chain. F-type ATP synthases consist of two structural domains, F(1) - containing the extramembraneous catalytic core, and F(0) - containing the membrane proton channel, linked together by a central stalk and a peripheral stalk. During catalysis, ATP synthesis in the catalytic domain of F(1) is coupled via a rotary mechanism of the central stalk subunits to proton translocation. Part of the complex F(0) domain Minor subunit located with subunit a/ATP6 in the membrane. Together with subunit e/TIM11, probably contributes to membrane curvature at the site of the ATP synthase dimer, ultimately contributing to formation of cristae. The sequence is that of ATP synthase subunit g, mitochondrial from Pichia angusta (Yeast).